We begin with the raw amino-acid sequence, 217 residues long: Peptide methionine sulfoxide reductase MsrA (217 aa).

The active site involves Cys56.

This sequence belongs to the MsrA Met sulfoxide reductase family.

It carries out the reaction L-methionyl-[protein] + [thioredoxin]-disulfide + H2O = L-methionyl-(S)-S-oxide-[protein] + [thioredoxin]-dithiol. The enzyme catalyses [thioredoxin]-disulfide + L-methionine + H2O = L-methionine (S)-S-oxide + [thioredoxin]-dithiol. Its function is as follows. Has an important function as a repair enzyme for proteins that have been inactivated by oxidation. Catalyzes the reversible oxidation-reduction of methionine sulfoxide in proteins to methionine. The polypeptide is Peptide methionine sulfoxide reductase MsrA (Rippkaea orientalis (strain PCC 8801 / RF-1) (Cyanothece sp. (strain PCC 8801))).